The primary structure comprises 118 residues: Large ribosomal subunit protein bL19 (118 aa).

Belongs to the bacterial ribosomal protein bL19 family.

This protein is located at the 30S-50S ribosomal subunit interface and may play a role in the structure and function of the aminoacyl-tRNA binding site. This Frankia casuarinae (strain DSM 45818 / CECT 9043 / HFP020203 / CcI3) protein is Large ribosomal subunit protein bL19.